The following is a 102-amino-acid chain: Inner membrane protein YaiY (102 aa).

Residues 1 to 24 are Cytoplasmic-facing; sequence MADFTLSKSLFSGKYRNASSTPGN. A helical transmembrane segment spans residues 25-45; sequence IAYALFVLFCFWAGAQLLNLL. The Periplasmic portion of the chain corresponds to 46–74; it reads VHAPGVYERLMQVQETGRPRVEIGLGVGT. The chain crosses the membrane as a helical span at residues 75-95; the sequence is IFGLIPFLVGCLIFAVVALWL. At 96–102 the chain is on the cytoplasmic side; that stretch reads HWRHRRQ.

Its subcellular location is the cell inner membrane. The sequence is that of Inner membrane protein YaiY (yaiY) from Escherichia coli O157:H7.